Consider the following 438-residue polypeptide: Rhomboid-related protein 1 (438 aa).

Residues 1–62 are disordered; it reads MGRVEDGGTT…PSQPGPALWS (62 aa). Residues 8-17 are compositionally biased toward acidic residues; the sequence is GTTEELEDWD. Transmembrane regions (helical) follow at residues 196-216, 262-282, 284-304, 308-328, 340-359, 372-392, and 405-425; these read PPVFMASVTLAQIIVFLCYGA, GFNALLQLMIGVPLEMVHGLL, ISLLYLAGVLAGSLTVSITDM, VVGGSGGVYALCSAHLANVVM, LRMVLALVCMSSEVGRAVWL, PSFMAHLAGAVVGVSMGLTIL, and WWVVLLAYGTFLLFAVFWNVF. Ser-312 serves as the catalytic Nucleophile. His-377 is a catalytic residue.

The protein belongs to the peptidase S54 family. Detected in heart, brain, skeletal muscle and kidney.

It localises to the membrane. It carries out the reaction Cleaves type-1 transmembrane domains using a catalytic dyad composed of serine and histidine that are contributed by different transmembrane domains.. Functionally, may be involved in regulated intramembrane proteolysis and the subsequent release of functional polypeptides from their membrane anchors. The sequence is that of Rhomboid-related protein 1 (RHBDL1) from Homo sapiens (Human).